A 504-amino-acid polypeptide reads, in one-letter code: 2,3-bisphosphoglycerate-independent phosphoglycerate mutase (504 aa).

Mn(2+) contacts are provided by Asp-11 and Ser-61. Residue Ser-61 is the Phosphoserine intermediate of the active site. Substrate contacts are provided by residues His-122, 152–153 (RD), Arg-183, Arg-189, 255–258 (RNDR), and Lys-329. Residues Asp-396, His-400, Asp-437, His-438, and His-455 each coordinate Mn(2+).

This sequence belongs to the BPG-independent phosphoglycerate mutase family. As to quaternary structure, monomer. The cofactor is Mn(2+).

It carries out the reaction (2R)-2-phosphoglycerate = (2R)-3-phosphoglycerate. It participates in carbohydrate degradation; glycolysis; pyruvate from D-glyceraldehyde 3-phosphate: step 3/5. Catalyzes the interconversion of 2-phosphoglycerate and 3-phosphoglycerate. The polypeptide is 2,3-bisphosphoglycerate-independent phosphoglycerate mutase (Bacteroides fragilis (strain ATCC 25285 / DSM 2151 / CCUG 4856 / JCM 11019 / LMG 10263 / NCTC 9343 / Onslow / VPI 2553 / EN-2)).